We begin with the raw amino-acid sequence, 61 residues long: Metallothionein (61 aa).

Residue Met-1 is modified to N-acetylmethionine. The tract at residues 1-29 is beta; sequence MDPNCSCAAGGSCTCAGSCKCKECKCTSC. A divalent metal cation is bound by residues Cys-5, Cys-7, Cys-13, Cys-15, Cys-19, Cys-21, Cys-24, Cys-26, Cys-29, Cys-33, Cys-34, Cys-36, Cys-37, Cys-41, Cys-44, Cys-48, Cys-50, Cys-57, Cys-59, and Cys-60. The interval 30–61 is alpha; sequence KKSCCSCCPPGCTKCAQGCVCKGASDKCNCCA.

It belongs to the metallothionein superfamily. Type 1 family. As to quaternary structure, monomer.

Functionally, metallothioneins have a high content of cysteine residues that bind various heavy metals. This Balaena mysticetus (Bowhead whale) protein is Metallothionein.